Here is a 330-residue protein sequence, read N- to C-terminus: ADP-L-glycero-D-manno-heptose-6-epimerase (330 aa).

NADP(+) is bound by residues 11-12, 32-33, Lys-39, Lys-54, 75-79, and Asn-92; these read FI, DN, and EGACS. The Proton acceptor role is filled by Tyr-139. Residue Lys-143 coordinates NADP(+). A substrate-binding site is contributed by Asn-168. Residues Val-169 and Lys-177 each coordinate NADP(+). Lys-177 acts as the Proton acceptor in catalysis. Substrate is bound by residues Arg-179, His-186, 200–203, Arg-213, and Tyr-292; that span reads FGEY.

Belongs to the NAD(P)-dependent epimerase/dehydratase family. HldD subfamily. In terms of assembly, homopentamer. Requires NADP(+) as cofactor.

The catalysed reaction is ADP-D-glycero-beta-D-manno-heptose = ADP-L-glycero-beta-D-manno-heptose. The protein operates within nucleotide-sugar biosynthesis; ADP-L-glycero-beta-D-manno-heptose biosynthesis; ADP-L-glycero-beta-D-manno-heptose from D-glycero-beta-D-manno-heptose 7-phosphate: step 4/4. Its function is as follows. Catalyzes the interconversion between ADP-D-glycero-beta-D-manno-heptose and ADP-L-glycero-beta-D-manno-heptose via an epimerization at carbon 6 of the heptose. In Burkholderia cenocepacia (strain HI2424), this protein is ADP-L-glycero-D-manno-heptose-6-epimerase.